We begin with the raw amino-acid sequence, 507 residues long: Xylose import ATP-binding protein XylG (507 aa).

ABC transporter domains lie at 5-242 (LKMT…VGRE) and 259-504 (LEVK…LSEK). Position 37–44 (37–44 (GENGSGKS)) interacts with ATP.

The protein belongs to the ABC transporter superfamily. Xylose importer (TC 3.A.1.2.4) family. The complex is composed of two ATP-binding proteins (XylG), two transmembrane proteins (XylH) and a solute-binding protein (XylF).

Its subcellular location is the cell inner membrane. The enzyme catalyses D-xylose(out) + ATP + H2O = D-xylose(in) + ADP + phosphate + H(+). Part of the ABC transporter complex XylFGH involved in xylose import. Responsible for energy coupling to the transport system. This chain is Xylose import ATP-binding protein XylG, found in Photobacterium profundum (strain SS9).